The sequence spans 121 residues: Large ribosomal subunit protein bL31 (121 aa).

Residues 1–97 form a large ribosomal subunit protein bL31 region; sequence MKEGIHPDYK…AKENRAAKRA (97 aa). Zn(2+) is bound by residues Cys16, Cys18, Cys36, and Cys39. The segment covering 65–80 has biased composition (low complexity); it reads ATPAKAEPAKKAPAAE. The disordered stretch occupies residues 65–121; that stretch reads ATPAKAEPAKKAPAAEPAKKVEAAKENRAAKRAKAGKSKKSEAAPAAEAPAADAKPE. Residues 74 to 121 are unknown; sequence KKAPAAEPAKKVEAAKENRAAKRAKAGKSKKSEAAPAAEAPAADAKPE. Over residues 81–93 the composition is skewed to basic and acidic residues; it reads PAKKVEAAKENRA. The segment covering 107 to 121 has biased composition (low complexity); it reads AAPAAEAPAADAKPE.

Belongs to the bacterial ribosomal protein bL31 family. Type A subfamily. In terms of assembly, part of the 50S ribosomal subunit. It depends on Zn(2+) as a cofactor.

In terms of biological role, binds the 23S rRNA. The chain is Large ribosomal subunit protein bL31 from Anaeromyxobacter dehalogenans (strain 2CP-C).